The sequence spans 820 residues: Leucine--tRNA ligase (820 aa).

Positions 42–52 (PYPSGDLHMGH) match the 'HIGH' region motif. Residues 576-580 (KMSKS) carry the 'KMSKS' region motif. Lys-579 is a binding site for ATP.

This sequence belongs to the class-I aminoacyl-tRNA synthetase family.

It is found in the cytoplasm. It catalyses the reaction tRNA(Leu) + L-leucine + ATP = L-leucyl-tRNA(Leu) + AMP + diphosphate. This Coxiella burnetii (strain RSA 331 / Henzerling II) protein is Leucine--tRNA ligase.